The primary structure comprises 223 residues: Ribonuclease T (223 aa).

In terms of domain architecture, Exonuclease spans 20 to 194 (VVIDVETAGF…YDTERTAELF (175 aa)). Mg(2+) is bound by residues Asp-23, Glu-25, His-181, and Asp-186. His-181 serves as the catalytic Proton donor/acceptor.

This sequence belongs to the RNase T family. Homodimer. It depends on Mg(2+) as a cofactor.

Its function is as follows. Trims short 3' overhangs of a variety of RNA species, leaving a one or two nucleotide 3' overhang. Responsible for the end-turnover of tRNA: specifically removes the terminal AMP residue from uncharged tRNA (tRNA-C-C-A). Also appears to be involved in tRNA biosynthesis. This is Ribonuclease T from Shewanella baltica (strain OS185).